A 136-amino-acid polypeptide reads, in one-letter code: ATP synthase epsilon chain, chloroplastic (136 aa).

Belongs to the ATPase epsilon chain family. F-type ATPases have 2 components, CF(1) - the catalytic core - and CF(0) - the membrane proton channel. CF(1) has five subunits: alpha(3), beta(3), gamma(1), delta(1), epsilon(1). CF(0) has three main subunits: a, b and c.

It localises to the plastid. It is found in the chloroplast thylakoid membrane. In terms of biological role, produces ATP from ADP in the presence of a proton gradient across the membrane. This Chaetosphaeridium globosum (Charophycean green alga) protein is ATP synthase epsilon chain, chloroplastic.